The sequence spans 709 residues: ATP-dependent RNA helicase dbp7 (709 aa).

The segment at 13 to 90 (DNAQSRKPEA…KPAHELKGNK (78 aa)) is disordered. Basic and acidic residues predominate over residues 16 to 34 (QSRKPEALKSSRRWTDRAR). Residues 44–65 (NESSKSTVKRNSGTNGASTDYK) are compositionally biased toward polar residues. Over residues 66–90 (NSQKEKVINPVFDPRKPAHELKGNK) the composition is skewed to basic and acidic residues. The Q motif motif lies at 138–167 (TNFAGVQLDTQLADHLNNKMNISAPTAIQS). The region spanning 172–366 (ALLNTDDKDA…DSALKDALYL (195 aa)) is the Helicase ATP-binding domain. ATP is bound at residue 185 to 192 (AQTGSGKT). Residues 301 to 304 (DEGD) carry the DEAD box motif. One can recognise a Helicase C-terminal domain in the interval 404-580 (LLRSHVRSYK…EQPNGPSGLL (177 aa)). Residues 662–690 (GKISGANSSKPRKQGGSVDKGKSKSSKDI) are disordered.

Belongs to the DEAD box helicase family. DDX31/DBP7 subfamily.

It localises to the nucleus. Its subcellular location is the nucleolus. The catalysed reaction is ATP + H2O = ADP + phosphate + H(+). Functionally, ATP-binding RNA helicase involved in the biogenesis of 60S ribosomal subunits and is required for the normal formation of 25S and 5.8S rRNAs. This is ATP-dependent RNA helicase dbp7 (dbp7) from Schizosaccharomyces pombe (strain 972 / ATCC 24843) (Fission yeast).